The chain runs to 338 residues: Lipoate-protein ligase A (338 aa).

The 188-residue stretch at 29–216 (PATQRVLFLW…AFFAHYGERV (188 aa)) folds into the BPL/LPL catalytic domain. ATP-binding positions include Arg-71, 76 to 79 (GAVF), and Lys-134. Lys-134 provides a ligand contact to (R)-lipoate.

Belongs to the LplA family. In terms of assembly, monomer.

It is found in the cytoplasm. The enzyme catalyses L-lysyl-[lipoyl-carrier protein] + (R)-lipoate + ATP = N(6)-[(R)-lipoyl]-L-lysyl-[lipoyl-carrier protein] + AMP + diphosphate + H(+). It functions in the pathway protein modification; protein lipoylation via exogenous pathway; protein N(6)-(lipoyl)lysine from lipoate: step 1/2. The protein operates within protein modification; protein lipoylation via exogenous pathway; protein N(6)-(lipoyl)lysine from lipoate: step 2/2. Its function is as follows. Catalyzes both the ATP-dependent activation of exogenously supplied lipoate to lipoyl-AMP and the transfer of the activated lipoyl onto the lipoyl domains of lipoate-dependent enzymes. The protein is Lipoate-protein ligase A of Escherichia coli O6:K15:H31 (strain 536 / UPEC).